The primary structure comprises 340 residues: MFWISLVCLSVSHKMIGMCYLLVAILCGFLGYIYSLFIRLELSIIGCGVLFGDYQYYNVLVTTHGLVMVFAFIMPVMMGGLVNYFVPVLSGFPDMVFPRLNNMSFWMFMGGFGALVSGLLTEEGMGIGWTMYPTLICVDFHSSLACDFTVFAVHLLGVSSILNSINLLGTLFCCRRKFFSFLNWTLFIWGSLITALLLIITLPVLAGGVTLVLCDRNFNTSFYDVVGGGDLLLFQHLFWFFGHPEVYIIIIPVFGLISTMVEVLGFRCVFSSVAMIYSMILIAILGFFVWAHHMFVVGMDVDTRAYFGSVTVLIGLPTCIKLFNWTYSFLYTDFIIAFEA.

A helical transmembrane segment spans residues 18–38 (MCYLLVAILCGFLGYIYSLFI). 2 residues coordinate Ca(2+): E41 and G46. A helical membrane pass occupies residues 42–62 (LSIIGCGVLFGDYQYYNVLVT). Residue H64 coordinates Fe(II)-heme a. The next 7 helical transmembrane spans lie at 66–86 (LVMV…NYFV), 100–120 (LNNM…SGLL), 148–168 (FTVF…INLL), 186–206 (LFIW…PVLA), 237–257 (LFWF…FGLI), 279–299 (MILI…VVGM), and 305–325 (AYFG…LFNW). H243 is a Cu cation binding site. Positions 243 to 247 (HPEVY) form a cross-link, 1'-histidyl-3'-tyrosine (His-Tyr). Y247 serves as a coordination point for O2. The Cu cation site is built by H292 and H293.

The protein belongs to the heme-copper respiratory oxidase family. In terms of assembly, component of the cytochrome c oxidase (complex IV, CIV), a multisubunit enzyme composed of a catalytic core of 3 subunits and several supernumerary subunits. The complex exists as a monomer or a dimer and forms supercomplexes (SCs) in the inner mitochondrial membrane with ubiquinol-cytochrome c oxidoreductase (cytochrome b-c1 complex, complex III, CIII). It depends on heme as a cofactor. Requires Cu cation as cofactor.

It localises to the mitochondrion inner membrane. It catalyses the reaction 4 Fe(II)-[cytochrome c] + O2 + 8 H(+)(in) = 4 Fe(III)-[cytochrome c] + 2 H2O + 4 H(+)(out). It functions in the pathway energy metabolism; oxidative phosphorylation. Functionally, component of the cytochrome c oxidase, the last enzyme in the mitochondrial electron transport chain which drives oxidative phosphorylation. The respiratory chain contains 3 multisubunit complexes succinate dehydrogenase (complex II, CII), ubiquinol-cytochrome c oxidoreductase (cytochrome b-c1 complex, complex III, CIII) and cytochrome c oxidase (complex IV, CIV), that cooperate to transfer electrons derived from NADH and succinate to molecular oxygen, creating an electrochemical gradient over the inner membrane that drives transmembrane transport and the ATP synthase. Cytochrome c oxidase is the component of the respiratory chain that catalyzes the reduction of oxygen to water. Electrons originating from reduced cytochrome c in the intermembrane space (IMS) are transferred via the dinuclear copper A center (CU(A)) of subunit 2 and heme A of subunit 1 to the active site in subunit 1, a binuclear center (BNC) formed by heme A3 and copper B (CU(B)). The BNC reduces molecular oxygen to 2 water molecules using 4 electrons from cytochrome c in the IMS and 4 protons from the mitochondrial matrix. This is Cytochrome c oxidase subunit 1 (COI) from Strigomonas oncopelti (Parasitic flagellate).